We begin with the raw amino-acid sequence, 206 residues long: Flavin prenyltransferase UbiX (206 aa).

FMN is bound by residues 11 to 13 (GAS), Ser-37, 103 to 106 (SMST), and Arg-138. 2 residues coordinate dimethylallyl phosphate: Tyr-168 and Arg-184.

This sequence belongs to the UbiX/PAD1 family.

The catalysed reaction is dimethylallyl phosphate + FMNH2 = prenylated FMNH2 + phosphate. In terms of biological role, flavin prenyltransferase that catalyzes the synthesis of the prenylated FMN cofactor (prenyl-FMN) for 4-hydroxy-3-polyprenylbenzoic acid decarboxylase UbiD. The prenyltransferase is metal-independent and links a dimethylallyl moiety from dimethylallyl monophosphate (DMAP) to the flavin N5 and C6 atoms of FMN. The chain is Flavin prenyltransferase UbiX from Synechocystis sp. (strain ATCC 27184 / PCC 6803 / Kazusa).